Reading from the N-terminus, the 175-residue chain is NADH-ubiquinone oxidoreductase chain 6 (175 aa).

5 consecutive transmembrane segments (helical) span residues 1-21 (MMTYIVFILSTIFVISFVGFS), 25-45 (SPIYGGVGLIVSGGVGCGIVM), 47-67 (FGGSFLGLMVFLIYLGGMLVV), 88-108 (VVMGAFISGLIVEVVFVLCVL), and 149-169 (YGVWLVIVTGWSLLIGVIVVL).

It belongs to the complex I subunit 6 family.

The protein resides in the mitochondrion membrane. The enzyme catalyses a ubiquinone + NADH + 5 H(+)(in) = a ubiquinol + NAD(+) + 4 H(+)(out). In terms of biological role, core subunit of the mitochondrial membrane respiratory chain NADH dehydrogenase (Complex I) that is believed to belong to the minimal assembly required for catalysis. Complex I functions in the transfer of electrons from NADH to the respiratory chain. The immediate electron acceptor for the enzyme is believed to be ubiquinone. This is NADH-ubiquinone oxidoreductase chain 6 (MT-ND6) from Rhinolophus monoceros (Formosan lesser horseshoe bat).